We begin with the raw amino-acid sequence, 219 residues long: Casein kinase II subunit beta' (219 aa).

Position 2 is a phosphothreonine; by autocatalysis (Thr2).

This sequence belongs to the casein kinase 2 subunit beta family. In terms of assembly, tetramer of two alpha and two beta' subunits. In terms of processing, phosphorylated by alpha subunit.

In terms of biological role, participates in Wnt signaling. Plays a complex role in regulating the basal catalytic activity of the alpha subunit. This is Casein kinase II subunit beta' (CkIIbeta2) from Drosophila melanogaster (Fruit fly).